The following is a 204-amino-acid chain: RNA-free ribonuclease P (204 aa).

Belongs to the HARP family.

It carries out the reaction Endonucleolytic cleavage of RNA, removing 5'-extranucleotides from tRNA precursor.. In terms of biological role, RNA-free RNase P that catalyzes the removal of the 5'-leader sequence from pre-tRNA to produce the mature 5'-terminus. The polypeptide is RNA-free ribonuclease P (Ignicoccus hospitalis (strain KIN4/I / DSM 18386 / JCM 14125)).